Consider the following 542-residue polypeptide: Glutamyl-tRNA reductase 2, chloroplastic (542 aa).

Residues 142 to 145, Ser-202, 207 to 209, and Gln-213 contribute to the substrate site; these read TCNR and EGQ. Cys-143 acts as the Nucleophile in catalysis. 284–289 contacts NADP(+); that stretch reads GAGKMG.

Belongs to the glutamyl-tRNA reductase family. In terms of tissue distribution, found in all tissues examined.

It is found in the plastid. The protein resides in the chloroplast. The catalysed reaction is (S)-4-amino-5-oxopentanoate + tRNA(Glu) + NADP(+) = L-glutamyl-tRNA(Glu) + NADPH + H(+). The protein operates within porphyrin-containing compound metabolism; protoporphyrin-IX biosynthesis; 5-aminolevulinate from L-glutamyl-tRNA(Glu): step 1/2. In terms of biological role, catalyzes the NADPH-dependent reduction of glutamyl-tRNA(Glu) to glutamate 1-semialdehyde (GSA). The protein is Glutamyl-tRNA reductase 2, chloroplastic (HEMA2) of Cucumis sativus (Cucumber).